The sequence spans 275 residues: Diaminopimelate epimerase (275 aa).

Substrate-binding residues include Asn-20 and Asn-63. The active-site Proton donor is the Cys-72. Residues 73 to 74 (GN), Asn-179, and 197 to 198 (ER) contribute to the substrate site. Cys-207 (proton acceptor) is an active-site residue. 208–209 (GT) serves as a coordination point for substrate.

The protein belongs to the diaminopimelate epimerase family. As to quaternary structure, homodimer.

It is found in the cytoplasm. The enzyme catalyses (2S,6S)-2,6-diaminopimelate = meso-2,6-diaminopimelate. Its pathway is amino-acid biosynthesis; L-lysine biosynthesis via DAP pathway; DL-2,6-diaminopimelate from LL-2,6-diaminopimelate: step 1/1. Functionally, catalyzes the stereoinversion of LL-2,6-diaminopimelate (L,L-DAP) to meso-diaminopimelate (meso-DAP), a precursor of L-lysine and an essential component of the bacterial peptidoglycan. The chain is Diaminopimelate epimerase from Chlamydia trachomatis serovar A (strain ATCC VR-571B / DSM 19440 / HAR-13).